The sequence spans 2371 residues: Reducing polyketide synthase DEP5 (2371 aa).

The 431-residue stretch at Leu47 to Ser477 folds into the Ketosynthase family 3 (KS3) domain. Residues Cys221, His358, and His399 each act as for beta-ketoacyl synthase activity in the active site. The interval Val593–Ser905 is malonyl-CoA:ACP transacylase (MAT) domain. Ser685 (for malonyltransferase activity) is an active-site residue. The segment at His982–Lys1120 is N-terminal hotdog fold. Positions His982–Met1158 are dehydratase (DH) domain. Residues His982–Gln1286 enclose the PKS/mFAS DH domain. His1014 serves as the catalytic Proton acceptor; for dehydratase activity. Residues Pro1132–Gln1286 form a C-terminal hotdog fold region. The active-site Proton donor; for dehydratase activity is the Asp1195. The interval Gly1656–Leu1964 is enoyl reductase (ER) domain. Residues Ala1988–Met2163 are ketoreductase (KR) domain. A Carrier domain is found at Ser2286 to Gln2364. Ser2323 bears the O-(pantetheine 4'-phosphoryl)serine mark.

Its pathway is polyketide biosynthesis. In terms of biological role, part of the gene cluster that mediates the biosynthesis of depudecin, a highly oxidized eleven-carbon linear polyketide that acts as a histone deacetylase (HDAC) inhibitor and makes a small contribution to pathogenesis. The reducing polyketide synthase DEP5 is the central enzyme in depudecin biosynthesis by yielding the backbone polyketide chain. The monooxygenases DEP2 and DEP4, as well as the uncharacterized protein DEP1, then act as tailoring enzymes to modify the intermediate polyketide chain into depudecin. The protein is Reducing polyketide synthase DEP5 of Fusarium langsethiae.